The sequence spans 64 residues: Defensin-like protein 41 (64 aa).

The interval 1–21 (MTQGKRKHPCDLKNPSKRAPP) is disordered. 4 disulfides stabilise this stretch: C10–C61, C24–C47, C33–C56, and C37–C58.

The protein belongs to the DEFL family.

The polypeptide is Defensin-like protein 41 (Arabidopsis thaliana (Mouse-ear cress)).